The following is a 206-amino-acid chain: Octanoyltransferase (206 aa).

Positions 30 to 206 constitute a BPL/LPL catalytic domain; it reads PETNDEIWLV…EFVTLLNNSI (177 aa). Residues 69 to 76, 137 to 139, and 150 to 152 contribute to the substrate site; these read RGGQVTYH, SLG, and GIA. The active-site Acyl-thioester intermediate is the Cys168.

Belongs to the LipB family.

It is found in the cytoplasm. It catalyses the reaction octanoyl-[ACP] + L-lysyl-[protein] = N(6)-octanoyl-L-lysyl-[protein] + holo-[ACP] + H(+). The protein operates within protein modification; protein lipoylation via endogenous pathway; protein N(6)-(lipoyl)lysine from octanoyl-[acyl-carrier-protein]: step 1/2. Catalyzes the transfer of endogenously produced octanoic acid from octanoyl-acyl-carrier-protein onto the lipoyl domains of lipoate-dependent enzymes. Lipoyl-ACP can also act as a substrate although octanoyl-ACP is likely to be the physiological substrate. In Francisella tularensis subsp. novicida (strain U112), this protein is Octanoyltransferase.